A 100-amino-acid polypeptide reads, in one-letter code: NADH-quinone oxidoreductase subunit K (100 aa).

3 consecutive transmembrane segments (helical) span residues 1–21, 28–48, and 64–84; these read MIGLNHYLIVSGLLFCIGLAG, ILLLFFSTEIMLNAINIGFIA, and FIIAIAASEVAIGLGLVILWF.

It belongs to the complex I subunit 4L family. NDH-1 is composed of 14 different subunits. Subunits NuoA, H, J, K, L, M, N constitute the membrane sector of the complex.

It localises to the cell inner membrane. The enzyme catalyses a quinone + NADH + 5 H(+)(in) = a quinol + NAD(+) + 4 H(+)(out). In terms of biological role, NDH-1 shuttles electrons from NADH, via FMN and iron-sulfur (Fe-S) centers, to quinones in the respiratory chain. The immediate electron acceptor for the enzyme in this species is believed to be ubiquinone. Couples the redox reaction to proton translocation (for every two electrons transferred, four hydrogen ions are translocated across the cytoplasmic membrane), and thus conserves the redox energy in a proton gradient. The protein is NADH-quinone oxidoreductase subunit K of Helicobacter acinonychis (strain Sheeba).